Here is a 312-residue protein sequence, read N- to C-terminus: R2-like ligand binding oxidase (312 aa).

Mn(2+) is bound by residues Glu-68, Glu-101, and His-104. Residues 71 to 162 (VTQDIQPFMA…AAQVRASATY (92 aa)) constitute a cross-link (3-(O4'-tyrosyl)-valine (Val-Tyr)). Glu-101 serves as a coordination point for Fe cation. Residues Glu-167, Glu-202, and His-205 each coordinate Fe cation.

The protein belongs to the ribonucleoside diphosphate reductase small chain family. R2-like ligand binding oxidase subfamily. In terms of assembly, homodimer. Fe cation serves as cofactor. It depends on Mn(2+) as a cofactor.

In terms of biological role, probable oxidase that might be involved in lipid metabolism. This is R2-like ligand binding oxidase from Mycobacterium sp. (strain KMS).